We begin with the raw amino-acid sequence, 524 residues long: Translation initiation factor eIF2B subunit delta (524 aa).

A disordered region spans residues 1-174 (MAAVAVAVRE…RQQVPTRKDY (174 aa)). Ala-2 carries the post-translational modification N-acetylalanine. Basic and acidic residues-rich tracts occupy residues 8 to 20 (VREESRSEMKTEL) and 31 to 40 (LTQEEKLQLR). Ser-12 is subject to Phosphoserine. Residues 41-51 (KEKKQQKKKRK) show a composition bias toward basic residues. Phosphothreonine is present on Thr-86. 2 stretches are compositionally biased toward basic and acidic residues: residues 96–121 (SKAELRAERRAKQEAERALKQARKGE) and 161–174 (RKPDRQQVPTRKDY). Residues 171–180 (RKDYGSKVSL) are may bind the chemical integrated stress response (ISR) inhibitor ISRIB.

The protein belongs to the eIF-2B alpha/beta/delta subunits family. Component of the translation initiation factor 2B (eIF2B) complex which is a heterodecamer of two sets of five different subunits: alpha, beta, gamma, delta and epsilon. Subunits alpha, beta and delta comprise a regulatory subcomplex and subunits epsilon and gamma comprise a catalytic subcomplex. Within the complex, the hexameric regulatory complex resides at the center, with the two heterodimeric catalytic subcomplexes bound on opposite sides.

It is found in the cytoplasm. The protein resides in the cytosol. Its activity is regulated as follows. Activated by the chemical integrated stress response (ISR) inhibitor ISRIB which stimulates guanine nucleotide exchange factor activity for both phosphorylated and unphosphorylated eIF2. In terms of biological role, acts as a component of the translation initiation factor 2B (eIF2B) complex, which catalyzes the exchange of GDP for GTP on eukaryotic initiation factor 2 (eIF2) gamma subunit. Its guanine nucleotide exchange factor activity is repressed when bound to eIF2 complex phosphorylated on the alpha subunit, thereby limiting the amount of methionyl-initiator methionine tRNA available to the ribosome and consequently global translation is repressed. The protein is Translation initiation factor eIF2B subunit delta (Eif2b4) of Rattus norvegicus (Rat).